The sequence spans 86 residues: SPCIIIDYLCVTETCFCERFKTNKELLEYITVMFTGVQNLLDTLNLGIVGVAQDYSDYNERVDTVAHETAHLIGAPHDEEGPCQDT.

Residue Asp7 coordinates Ca(2+). His67 is a Zn(2+) binding site. Glu68 is a catalytic residue. Zn(2+) is bound by residues His71 and His77.

It belongs to the venom metalloproteinase (M12B) family. Zn(2+) is required as a cofactor. Expressed by the venom gland.

It localises to the secreted. In Tityus serrulatus (Brazilian scorpion), this protein is Venom metalloproteinase.